Here is a 77-residue protein sequence, read N- to C-terminus: Translation initiation factor IF-1, chloroplastic (77 aa).

In terms of domain architecture, S1-like spans 1–71 (MKEQKLIHEG…TKGRIIYRLR (71 aa)).

This sequence belongs to the IF-1 family. In terms of assembly, component of the 30S ribosomal translation pre-initiation complex which assembles on the 30S ribosome in the order IF-2 and IF-3, IF-1 and N-formylmethionyl-tRNA(fMet); mRNA recruitment can occur at any time during PIC assembly.

The protein localises to the plastid. It is found in the chloroplast. One of the essential components for the initiation of protein synthesis. Stabilizes the binding of IF-2 and IF-3 on the 30S subunit to which N-formylmethionyl-tRNA(fMet) subsequently binds. Helps modulate mRNA selection, yielding the 30S pre-initiation complex (PIC). Upon addition of the 50S ribosomal subunit IF-1, IF-2 and IF-3 are released leaving the mature 70S translation initiation complex. The protein is Translation initiation factor IF-1, chloroplastic of Dioscorea elephantipes (Elephant's foot yam).